A 333-amino-acid chain; its full sequence is Homeobox protein engrailed-1 (333 aa).

The segment covering 1–14 (MEEPPEGHGHHRDA) has biased composition (basic and acidic residues). Disordered regions lie at residues 1-184 (MEEP…AAKY) and 226-247 (RPSSPRTRKLKKKKTEKEDKRP). A compositionally biased stretch (gly residues) spans 20–31 (ANGGGGGGGGSD). Positions 38 to 66 (SPSPAPASPAAPCPLPLPRRRPPPPPPPR) are enriched in pro residues. Residues 94–104 (TGAGGGGGGGG) are compositionally biased toward gly residues. A compositionally biased stretch (low complexity) spans 144–173 (DGSAPAGTAAKANPGTAAGAAGAAGAAKAQ). Residues 244-303 (DKRPRTAFTAEQLQRLKAEFQANRYITEQRRQSLAQELSLNESRVKIWFQNKRAKIKKAT) constitute a DNA-binding region (homeobox).

The protein belongs to the engrailed homeobox family.

Its subcellular location is the nucleus. In terms of biological role, required for proper formation of the apical ectodermal ridge and correct dorsal-ventral patterning in the limb. This chain is Homeobox protein engrailed-1 (EN1), found in Gallus gallus (Chicken).